The following is a 353-amino-acid chain: Photosystem II protein D1 (353 aa).

T2 bears the N-acetylthreonine mark. Position 2 is a phosphothreonine (T2). The next 3 membrane-spanning stretches (helical) occupy residues 29–46 (YIGWFGVLMIPTLLTATS), 118–133 (HFLLGVACYMGREWEL), and 142–156 (WIAVAYSAPVAAATA). Position 118 (H118) interacts with chlorophyll a. Y126 is a pheophytin a binding site. [CaMn4O5] cluster contacts are provided by D170 and E189. Residues 197–218 (FHMLGVAGVFGSSLFSAMHGSL) traverse the membrane as a helical segment. H198 provides a ligand contact to chlorophyll a. Residues H215 and 264 to 265 (SF) contribute to the a quinone site. Residue H215 coordinates Fe cation. H272 is a binding site for Fe cation. The helical transmembrane segment at 274–288 (FLAAWPVVGIWFTAL) threads the bilayer. [CaMn4O5] cluster-binding residues include H332, E333, D342, and A344. A propeptide spanning residues 345–353 (AMEAPSVNG) is cleaved from the precursor.

The protein belongs to the reaction center PufL/M/PsbA/D family. As to quaternary structure, PSII is composed of 1 copy each of membrane proteins PsbA, PsbB, PsbC, PsbD, PsbE, PsbF, PsbH, PsbI, PsbJ, PsbK, PsbL, PsbM, PsbT, PsbX, PsbY, PsbZ, Psb30/Ycf12, at least 3 peripheral proteins of the oxygen-evolving complex and a large number of cofactors. It forms dimeric complexes. The D1/D2 heterodimer binds P680, chlorophylls that are the primary electron donor of PSII, and subsequent electron acceptors. It shares a non-heme iron and each subunit binds pheophytin, quinone, additional chlorophylls, carotenoids and lipids. D1 provides most of the ligands for the Mn4-Ca-O5 cluster of the oxygen-evolving complex (OEC). There is also a Cl(-1) ion associated with D1 and D2, which is required for oxygen evolution. The PSII complex binds additional chlorophylls, carotenoids and specific lipids. serves as cofactor. Tyr-161 forms a radical intermediate that is referred to as redox-active TyrZ, YZ or Y-Z. In terms of processing, C-terminally processed by CTPA; processing is essential to allow assembly of the oxygen-evolving complex and thus photosynthetic growth.

It localises to the plastid. The protein resides in the chloroplast thylakoid membrane. The catalysed reaction is 2 a plastoquinone + 4 hnu + 2 H2O = 2 a plastoquinol + O2. Photosystem II (PSII) is a light-driven water:plastoquinone oxidoreductase that uses light energy to abstract electrons from H(2)O, generating O(2) and a proton gradient subsequently used for ATP formation. It consists of a core antenna complex that captures photons, and an electron transfer chain that converts photonic excitation into a charge separation. The D1/D2 (PsbA/PsbD) reaction center heterodimer binds P680, the primary electron donor of PSII as well as several subsequent electron acceptors. This Vigna unguiculata (Cowpea) protein is Photosystem II protein D1.